A 426-amino-acid chain; its full sequence is NADH-quinone oxidoreductase subunit D 1 (426 aa).

The disordered stretch occupies residues 1–51; that stretch reads MATEFTVPDSAARIATAQQAGGGTPVRSGPPDEGGEFSGDRMSLSMGPSHP.

This sequence belongs to the complex I 49 kDa subunit family. NDH-1 is composed of 14 different subunits. Subunits NuoB, C, D, E, F, and G constitute the peripheral sector of the complex.

It is found in the cell inner membrane. The enzyme catalyses a quinone + NADH + 5 H(+)(in) = a quinol + NAD(+) + 4 H(+)(out). NDH-1 shuttles electrons from NADH, via FMN and iron-sulfur (Fe-S) centers, to quinones in the respiratory chain. The immediate electron acceptor for the enzyme in this species is believed to be ubiquinone. Couples the redox reaction to proton translocation (for every two electrons transferred, four hydrogen ions are translocated across the cytoplasmic membrane), and thus conserves the redox energy in a proton gradient. The sequence is that of NADH-quinone oxidoreductase subunit D 1 from Opitutus terrae (strain DSM 11246 / JCM 15787 / PB90-1).